The primary structure comprises 225 residues: PKHD-type hydroxylase YbiX (225 aa).

One can recognise a Fe2OG dioxygenase domain in the interval 78–177 (TLSTPLFNRY…RVASFMWIQS (100 aa)). Fe cation contacts are provided by H96, D98, and H158. R168 contributes to the 2-oxoglutarate binding site.

Fe(2+) serves as cofactor. Requires L-ascorbate as cofactor.

The sequence is that of PKHD-type hydroxylase YbiX from Escherichia coli O7:K1 (strain IAI39 / ExPEC).